Consider the following 1392-residue polypeptide: ATP-dependent helicase/nuclease subunit A (1392 aa).

The UvrD-like helicase ATP-binding domain maps to 4-595 (FKPTPAQSKA…IVLGENFRSM (592 aa)). Residue 25-32 (ASAGSGKT) participates in ATP binding. The 307-residue stretch at 623–929 (AHLKYAATYY…NVMTIHGSKG (307 aa)) folds into the UvrD-like helicase C-terminal domain.

The protein belongs to the helicase family. AddA subfamily. In terms of assembly, heterodimer of AddA and AddB/RexB. It depends on Mg(2+) as a cofactor.

It catalyses the reaction Couples ATP hydrolysis with the unwinding of duplex DNA by translocating in the 3'-5' direction.. It carries out the reaction ATP + H2O = ADP + phosphate + H(+). In terms of biological role, the heterodimer acts as both an ATP-dependent DNA helicase and an ATP-dependent, dual-direction single-stranded exonuclease. Recognizes the chi site generating a DNA molecule suitable for the initiation of homologous recombination. The AddA nuclease domain is required for chi fragment generation; this subunit has the helicase and 3' -&gt; 5' nuclease activities. The sequence is that of ATP-dependent helicase/nuclease subunit A from Limosilactobacillus reuteri subsp. reuteri (strain JCM 1112) (Lactobacillus reuteri).